A 682-amino-acid chain; its full sequence is Guanylate cyclase soluble subunit beta-2 (682 aa).

H43 contributes to the heme binding site. The 129-residue stretch at 408-536 folds into the Guanylate cyclase domain; sequence TILFSDVVTF…DTVNTASRME (129 aa). The interval 592–667 is disordered; sequence MGRPSAPADG…QPSPDETKTS (76 aa). Residues 649-667 are compositionally biased toward polar residues; it reads RNSTDAVNNQPSPDETKTS.

The protein belongs to the adenylyl cyclase class-4/guanylyl cyclase family. In terms of assembly, heterodimer of an alpha and a beta chain. Requires heme as cofactor. As to expression, kidney and liver.

Its subcellular location is the cytoplasm. The enzyme catalyses GTP = 3',5'-cyclic GMP + diphosphate. Its activity is regulated as follows. Activated by nitric oxide in the presence of magnesium or manganese ions. This Rattus norvegicus (Rat) protein is Guanylate cyclase soluble subunit beta-2 (Gucy1b2).